The primary structure comprises 2829 residues: MAAASYDQLVKQVEALTMENTNLRQELEDNSNHLTKLETEATNMKEVLKQLQGSIEDEAMASSGPIDLLERFKDLNLDSSNIPAGKARPKMSMRSYGSREGSLSGHSGECSPVPVGSFQRRGLLNGSRESAGYMEELEKERLLLIAEHEKEEKEKRWYYAQLQNLTKRIDSLPLTENFSMQTDMTRRQLEYEARQIRAAMEEQLGTCQDMEKRVQTRVGKIHQIEEEILRIRQLLQSQVAEAAERTPQSKHDAGSRDAEKLPDGQGTSEITASGNVGSGQGSSSRADHDTTSVMSSNSTYSVPRRLTSHLGTKVEMVYSLLSMLGTHDKDDMSRTLLAMSSSQDSCIAMRQSGCLPLLIQLLHGNDKDSVLLGNSRGSKEARASGSAALDNIIHSQPDDKRGRREIRVLHLLEQIRAYCETCWEWQEAHEQGMDQDKNPMPAPVDHQICPAVCVLMKLSFDEEHRHAMNELGGLQAIAELLQVDCEMYGLINDHYSVTLRRYAGMALTNLTFGDVANKATLCSMKSCMRALVAQLKSESEDLQQVIASVLRNLSWRADVNSKKTLREVGSVKALMECALDVKKESTLKSVLSALWNLSAHCTENKADICSVDGALAFLVSTLTYRSQTNTLAIIESGGGILRNVSSLIATNEDHRQILRENNCLQTLLQHLKSHSLTIVSNACGTLWNLSARNAKDQEGLWDMGAVSMLKNLIHSKHKMIAMGSAAALRNLMANRPAKYKDANIMSPGSSVPSLHVRKQKALEAELDAQHLSETFDNIDNLSPKTTHRNKQRHKQNLCSEYALDSSRHDDSICRSDNFSIGNLTVLSPYINTTVLPGSSSPRPTMDGSRPEKDRERTAGLGNYHSTTESSGNSSKRIGIQLSTTAQISKVMDEVSNIHLVQENRSSGSASEMHCMSDERNSQRKPSSNHPQSNPFTFTKAESSTRGCPVAFMKMEYKMASNDSLNSVSSTEGYGKRGQVKPSVESYSEDDESKFFSYGQYPAGLAHKIQSANHMDDNDTELDTPINYSLKYSDEQLNSGRQSPTQNERWSRPKHIIDSEMKQSEQRQPRTTKTTYSSYTENKEEKHKKFPPHFNQSENVPAYTRSRGANNQVDQSRVSSNLSNNSKASKPHCQVDDYDDDKTTNFSERYSEEEQQEDETERQNKYNIKAYASEEHHGEQPIDYSRKYSTDVPSSAQKPSFPYSNNSSKQKPKKEQVSSNSNTPTPSPNSNRQNQLHPNSAQSRPGLNRPKQIPNKPPSINQETIQTYCVEDTPICFSRGSSLSSLSSAEDEIEGRERNSRGQESNNTLQITEPKEISAVSKDGAVNETRSSVHHTRTKNNRLQTSNISPSDSSRHKSVEFSSGAKSPSKSGAQTPKSPPEHYVQETPLMFSRCTSGSSLDSFESHSIASSIASSVASEHMISGIISPSDLPDSPGQTMPPSRSKTPPPPQTVQAKKDGSKPIVPDEERGKVAKTAVHSAIQRVQVLQEADTLLHFATESTPDGFSCASSLSALSLDEPYIQKDVQLKIMPPVLENDQGNKAEPEKEFIDNKAKKEDKRSEQEKDMLDDTDDDIDILEECIISAMPRKPSRKNKKVPQPTPGKPPPPVARKPSQLPVYKLLSSQNRLQTQKHVNFTHSDDMPRVYCVEGTPINFSTATSLSDLTIESPPSEPTNDQPNTDSLSTDLEKRDTIPTEGRSTDDTDASKPLNPTTVLDEDKAEEGDILAECIHSAMPKGKSHKPYRVKKIMDQINHTSAATSSGNSRSMQETDKNKPTSPVKPMPQSIGFKERLKKNTELKLNPNSENQYCDPRKPSSKKPSKVANEKIPNNEERTKGFAFDSPHHYTPIEGTPYCFSRNDSLSSLDFEDDDIDLSKEKAELRKEKGTKDTDQKVKYKHENRAINPMGKQDQTGPKSLGGRDQPKALVQKPTSFSSAAKGTQDRGGATDEKMENFAIENTPVCFSRNSSLSSLSDIDQENNNKETEPLKQTGTSETQLGLRRPQTSGYAPKSFHVEDTPVCFSRNSSLSSLSIDSEDDLLQECISSAMPKKRKPSKIKNEVGKSRSNSVGGILAEEPDLTLDLRDIQSPDSENAFSPDSENFDWKAIQEGANSIVSRLHQAAAAGSLSRQGSSDSDSILSLKSGISLGSPFHLTLDKEEKTITSNKGPKILKPAEKSALENKKTEEEPKGIKGGKKVYKSLITGKSRSSSDFSSHCKQSVQTNMPSISRGRTMIHIPGVRASSPSTSPVSKKGPVFKNVPSKGSNENPSSSSSPKGTKPLKSELVYGSRPSSTPGGSSKGNSRSGSRDSASSRPSPQPLSRPLQSPGRNSISPGKNGISPPNKFSQLPRTTSPSTASTKSSGSGRMSYTSPGRQLSQPNLSKQSGLPKTHSSIPRSESASKSLNQNVNTGSNKKVELSRMSSTKSSGSESDRSERPALVRQSTFIKEAPSPTLRRKLEESASFESLSSSSRADSPPRSQTQTPALSPSLPDMALSTHSIQAGGWRKMPPNLNPAAEHGDSRRRHDISRSHSESPSRLPITRSGTWKREHSKHSSSLPRVSTWRRTGSSSSILSASSESSEKAKSEDEKQQVCSFPGPRSECSSSAKGTWRKIKESEILETPSNGSSSTIAESNCSLESKTLVYQMAPAVSKTEDVWVRIEDCPINNPRSGRSPTGNSPPVIDNVLDQGQKEEAAKDCHTRHNSGNGNVPLLENRQKSFIKVDGLDTKGTDPKSLINNQQETNENTVAERTAFSSSSSSKHSSPSGTVAARVTPFNYNPSPRKSNGENSTSRPSQIPTPVTNSTKKRDSKTETTDSSGSQSPKRHSGSYLVTSV.

The stretch at 4 to 58 (ASYDQLVKQVEALTMENTNLRQELEDNSNHLTKLETEATNMKEVLKQLQGSIEDE) forms a coiled coil. Disordered stretches follow at residues 80–114 (SNIP…SPVP) and 240–300 (AEAA…NSTY). A coiled-coil region spans residues 133-244 (YMEELEKERL…LQSQVAEAAE (112 aa)). Positions 242 to 262 (AAERTPQSKHDAGSRDAEKLP) are enriched in basic and acidic residues. Polar residues predominate over residues 291–300 (TSVMSSNSTY). ARM repeat units lie at residues 343-384 (QDSC…ARAS), 462-504 (EEHR…RYAG), 516-555 (ANKA…NLSW), 559-599 (VNSK…NLSA), 603-646 (ENKA…NVSS), 652-691 (EDHR…NLSA), and 694-733 (AKDQ…NLMA). The span at 833–842 (TVLPGSSSPR) shows a compositional bias: polar residues. Disordered regions lie at residues 833–877 (TVLP…SKRI), 901–941 (QENR…TKAE), 963–988 (SLNS…SYSE), 1032–1260 (SDEQ…PSIN), 1278–1382 (RGSS…PEHY), 1424–1469 (IISP…EERG), 1533–1612 (LEND…RKPS), 1657–1718 (TSLS…EDKA), 1754–1842 (SAAT…SPHH), 1875–1950 (KAEL…KMEN), 1963–2012 (NSSL…FHVE), 2041–2069 (SSAM…GGIL), 2154–2627 (EEKT…TIAE), and 2686–2829 (KEEA…VTSV). The segment covering 848–857 (SRPEKDRERT) has biased composition (basic and acidic residues). Polar residues-rich tracts occupy residues 863–877 (YHST…SKRI) and 923–941 (RKPS…TKAE). The segment covering 1034–1047 (EQLNSGRQSPTQNE) has biased composition (polar residues). Residues 1048–1067 (RWSRPKHIIDSEMKQSEQRQ) are compositionally biased toward basic and acidic residues. Polar residues-rich tracts occupy residues 1068-1079 (PRTTKTTYSSYT) and 1106-1117 (RGANNQVDQSRV). Over residues 1150-1159 (SEEEQQEDET) the composition is skewed to acidic residues. A compositionally biased stretch (basic and acidic residues) spans 1171 to 1188 (ASEEHHGEQPIDYSRKYS). Residues 1190-1208 (DVPSSAQKPSFPYSNNSSK) show a composition bias toward polar residues. Over residues 1217–1230 (SSNSNTPTPSPNSN) the composition is skewed to low complexity. Polar residues-rich tracts occupy residues 1231–1244 (RQNQ…QSRP), 1301–1310 (GQESNNTLQI), and 1340–1351 (NRLQTSNISPSD). Low complexity predominate over residues 1361–1372 (SSGAKSPSKSGA). 2 stretches are compositionally biased toward basic and acidic residues: residues 1454–1469 (AKKD…EERG) and 1537–1566 (QGNK…KDML). Residues 1545–1578 (KEFIDNKAKKEDKRSEQEKDMLDDTDDDIDILEE) adopt a coiled-coil conformation. Positions 1567–1577 (DDTDDDIDILE) are enriched in acidic residues. Residues 1597–1608 (QPTPGKPPPPVA) show a composition bias toward pro residues. The segment covering 1671-1683 (PTNDQPNTDSLST) has biased composition (polar residues). The span at 1684–1703 (DLEKRDTIPTEGRSTDDTDA) shows a compositional bias: basic and acidic residues. A compositionally biased stretch (polar residues) spans 1754-1765 (SAATSSGNSRSM). Basic and acidic residues-rich tracts occupy residues 1786–1795 (FKERLKKNTE) and 1875–1898 (KAEL…HENR). 2 stretches are compositionally biased toward polar residues: residues 1926 to 1935 (KPTSFSSAAK) and 1984 to 2003 (LKQT…QTSG). Residues 2168–2186 (KPAEKSALENKKTEEEPKG) are compositionally biased toward basic and acidic residues. The span at 2199 to 2222 (TGKSRSSSDFSSHCKQSVQTNMPS) shows a compositional bias: polar residues. Composition is skewed to low complexity over residues 2256 to 2275 (PSKG…GTKP), 2283 to 2322 (GSRP…LQSP), and 2346 to 2359 (TTSP…SSGS). Composition is skewed to polar residues over residues 2360 to 2408 (GRMS…TGSN) and 2415 to 2424 (RMSSTKSSGS). Low complexity predominate over residues 2456 to 2474 (SASFESLSSSSRADSPPRS). Polar residues predominate over residues 2549–2562 (SSSLPRVSTWRRTG). Over residues 2563 to 2573 (SSSSILSASSE) the composition is skewed to low complexity. Over residues 2574 to 2585 (SSEKAKSEDEKQ) the composition is skewed to basic and acidic residues. The segment covering 2616-2627 (TPSNGSSSTIAE) has biased composition (polar residues). Residues 2686-2695 (KEEAAKDCHT) show a composition bias toward basic and acidic residues. Residues 2730–2743 (LINNQQETNENTVA) show a composition bias toward polar residues. The segment covering 2749–2760 (SSSSSSKHSSPS) has biased composition (low complexity). Polar residues predominate over residues 2770-2798 (FNYNPSPRKSNGENSTSRPSQIPTPVTNS).

Belongs to the adenomatous polyposis coli (APC) family.

Promotes rapid degradation of CTNNB1 and participates in Wnt signaling as a negative regulator. This Xenopus laevis (African clawed frog) protein is Adenomatous polyposis coli homolog (apc).